We begin with the raw amino-acid sequence, 741 residues long: Probable basic-leucine zipper transcription factor I (741 aa).

Positions 77–117 form a coiled coil; it reads QIIEQIQFLQQQQQQQHDQIQQQLHNFQQQYQQQYQQRQQQ. Low complexity-rich tracts occupy residues 153–164, 172–237, 277–290, and 381–390; these read QQPPQSLQQQQQ, PQQQ…QIQK, IQQQQLPPQTIQQK, and QQQQQQQQQQ. Disordered regions lie at residues 153–237, 277–305, and 349–390; these read QQPP…QIQK, IQQQQLPPQTIQQKEINKKNQSKQSSNSM, and KQKE…QQQQ. A bZIP domain is found at 429–492; the sequence is ESKKSIKRIN…HEGGTMAILK (64 aa). A basic motif region spans residues 431–432; the sequence is KK. The segment at 434 to 441 is leucine-zipper; sequence IKRINQNI.

The protein belongs to the bZIP family.

It localises to the nucleus. Its function is as follows. Probable transcriptional regulator. This Dictyostelium discoideum (Social amoeba) protein is Probable basic-leucine zipper transcription factor I (bzpI).